The chain runs to 419 residues: Serine hydroxymethyltransferase (419 aa).

Residues L121 and G125–L127 each bind (6S)-5,6,7,8-tetrahydrofolate. K230 carries the post-translational modification N6-(pyridoxal phosphate)lysine. S355–F357 lines the (6S)-5,6,7,8-tetrahydrofolate pocket.

It belongs to the SHMT family. As to quaternary structure, homodimer. Pyridoxal 5'-phosphate serves as cofactor.

The protein resides in the cytoplasm. The catalysed reaction is (6R)-5,10-methylene-5,6,7,8-tetrahydrofolate + glycine + H2O = (6S)-5,6,7,8-tetrahydrofolate + L-serine. It functions in the pathway one-carbon metabolism; tetrahydrofolate interconversion. Its pathway is amino-acid biosynthesis; glycine biosynthesis; glycine from L-serine: step 1/1. Its function is as follows. Catalyzes the reversible interconversion of serine and glycine with tetrahydrofolate (THF) serving as the one-carbon carrier. This reaction serves as the major source of one-carbon groups required for the biosynthesis of purines, thymidylate, methionine, and other important biomolecules. Also exhibits THF-independent aldolase activity toward beta-hydroxyamino acids, producing glycine and aldehydes, via a retro-aldol mechanism. This Streptococcus equi subsp. zooepidemicus (strain MGCS10565) protein is Serine hydroxymethyltransferase.